The following is a 127-amino-acid chain: Small ribosomal subunit protein uS11 (127 aa).

The protein belongs to the universal ribosomal protein uS11 family. In terms of assembly, part of the 30S ribosomal subunit. Interacts with proteins S7 and S18. Binds to IF-3.

Located on the platform of the 30S subunit, it bridges several disparate RNA helices of the 16S rRNA. Forms part of the Shine-Dalgarno cleft in the 70S ribosome. The polypeptide is Small ribosomal subunit protein uS11 (Rickettsia bellii (strain RML369-C)).